The following is an 84-amino-acid chain: Neurotoxin BmK-M11 (84 aa).

The N-terminal stretch at 1–19 (MNYLVMISFALLLMTGVES) is a signal peptide. Residues 21 to 83 (RDAYIAKPEN…VPIRVPGKCH (63 aa)) form the LCN-type CS-alpha/beta domain. 4 disulfides stabilise this stretch: cysteine 31–cysteine 82, cysteine 35–cysteine 55, cysteine 41–cysteine 65, and cysteine 45–cysteine 67. A propeptide (removed by a carboxypeptidase) is located at residue arginine 84.

It belongs to the long (4 C-C) scorpion toxin superfamily. Sodium channel inhibitor family. Alpha subfamily. In terms of tissue distribution, expressed by the venom gland.

Its subcellular location is the secreted. In terms of biological role, alpha toxins bind voltage-independently at site-3 of sodium channels (Nav) and inhibit the inactivation of the activated channels, thereby blocking neuronal transmission. This recombinant toxin selectively inhibits the fast inactivation of mNav1.4/SCN4A (EC(50)=82.3 nM) (tested in HEK293 cells). This Olivierus martensii (Manchurian scorpion) protein is Neurotoxin BmK-M11.